The chain runs to 374 residues: DNA replication and repair protein RecF (374 aa).

30–37 (GENAQGKT) serves as a coordination point for ATP.

The protein belongs to the RecF family.

The protein resides in the cytoplasm. Functionally, the RecF protein is involved in DNA metabolism; it is required for DNA replication and normal SOS inducibility. RecF binds preferentially to single-stranded, linear DNA. It also seems to bind ATP. This chain is DNA replication and repair protein RecF, found in Pediococcus pentosaceus (strain ATCC 25745 / CCUG 21536 / LMG 10740 / 183-1w).